Consider the following 150-residue polypeptide: UPF0756 membrane protein NTHI1233 (150 aa).

The next 4 helical transmembrane spans lie at 1–21 (MTLQLNTIALLLVILLILGVL), 52–72 (YGVKIGIIILTIGVLSPLVSG), 81–101 (GFLSWKMALSIAVGVLVAWLA), and 123–143 (IIGVAFLGGIPVGPLIAAGIL).

The protein belongs to the UPF0756 family.

Its subcellular location is the cell membrane. The protein is UPF0756 membrane protein NTHI1233 of Haemophilus influenzae (strain 86-028NP).